Consider the following 306-residue polypeptide: MPIRIPDQLPARKTLETEGVVVMDQSRSARQDIRPLQFGLLNLMPNKQRTETQFARLIASTPLQIDLTLVRVADPLSKSTPEDYLQNFYSTWEDVRAKKFDGFVVTGAPIANMPFEDVRYWPEMLEIMDWTQTNVHHTMFICWGAQAALHHLHGVKRYRMEHKAFGVYRHKVLDTRHPFLRGFSDDLAVPVSRYNDIDRQSLSPDLDILIDSDEVGICMLDDRKYRAAYMLNHLEYDNTSLADEYHRDIEAGLDTPLPVNLFPGNDPSRMPENRWRSHAHLLFQNWINEIYQTTPYELEKVGTGEW.

Cys-142 acts as the Acyl-thioester intermediate in catalysis. Substrate contacts are provided by Lys-163 and Ser-192. Catalysis depends on His-233, which acts as the Proton acceptor. Glu-235 is an active-site residue. Arg-247 contributes to the substrate binding site.

Belongs to the MetA family.

It localises to the cytoplasm. It catalyses the reaction L-homoserine + succinyl-CoA = O-succinyl-L-homoserine + CoA. It functions in the pathway amino-acid biosynthesis; L-methionine biosynthesis via de novo pathway; O-succinyl-L-homoserine from L-homoserine: step 1/1. Its function is as follows. Transfers a succinyl group from succinyl-CoA to L-homoserine, forming succinyl-L-homoserine. The polypeptide is Homoserine O-succinyltransferase (Pelagibacterium halotolerans (strain DSM 22347 / JCM 15775 / CGMCC 1.7692 / B2)).